A 283-amino-acid chain; its full sequence is MLQTARQDQEVLVEMRNAGVHRSGRWLVRGVDLTVRRGEIVTLIGPNGSGKSTTVKMAIGVLQPDEGAVRRMPSLKVGYVPQKVSIDWTLPLSVERLMALTGTLDRKKVGEALEAAGIAHLARAEVQTLSGGEFQRALLARALAREPDLLVLDEPVQGVDFTGEIALYQLISEIRDRTGCGVLLISHDLHVVMAATDTVICLNGHICCRGTPEKVLKSPEYVRLFGARAGDTLAIYHHHHDHTHLADGRVRQADGTIVDDCHAHHHDHARDGGQGGGGHGHAG.

The ABC transporter domain occupies 13-228 (VEMRNAGVHR…PEYVRLFGAR (216 aa)). 45 to 52 (GPNGSGKS) contributes to the ATP binding site. The disordered stretch occupies residues 264–283 (HHHDHARDGGQGGGGHGHAG). Residues 272-283 (GGQGGGGHGHAG) are compositionally biased toward gly residues.

Belongs to the ABC transporter superfamily. Zinc importer (TC 3.A.1.15.5) family. As to quaternary structure, the complex is composed of two ATP-binding proteins (ZnuC), two transmembrane proteins (ZnuB) and a solute-binding protein (ZnuA).

The protein resides in the cell inner membrane. The catalysed reaction is Zn(2+)(out) + ATP(in) + H2O(in) = Zn(2+)(in) + ADP(in) + phosphate(in) + H(+)(in). Part of the ABC transporter complex ZnuABC involved in zinc import. Responsible for energy coupling to the transport system. The chain is Zinc import ATP-binding protein ZnuC from Chelativorans sp. (strain BNC1).